The following is a 29-amino-acid chain: Thrombin-like enzyme collinein-2 (29 aa).

In terms of assembly, monomer. As to expression, expressed by the venom gland.

It is found in the secreted. Functionally, thrombin-like snake venom serine protease. This Crotalus durissus collilineatus (Brazilian rattlesnake) protein is Thrombin-like enzyme collinein-2.